Reading from the N-terminus, the 156-residue chain is NADH-ubiquinone oxidoreductase chain 6 (156 aa).

Helical transmembrane passes span 1 to 21 (MILT…YLAS), 24 to 44 (IVLG…FASF), 49 to 69 (FAFL…AYFL), 77 to 97 (ISNF…SALT), and 121 to 141 (STAP…VIVV).

The protein belongs to the complex I subunit 6 family.

It localises to the mitochondrion membrane. It carries out the reaction a ubiquinone + NADH + 5 H(+)(in) = a ubiquinol + NAD(+) + 4 H(+)(out). Its function is as follows. Core subunit of the mitochondrial membrane respiratory chain NADH dehydrogenase (Complex I) that is believed to belong to the minimal assembly required for catalysis. Complex I functions in the transfer of electrons from NADH to the respiratory chain. The immediate electron acceptor for the enzyme is believed to be ubiquinone. This Lumbricus terrestris (Common earthworm) protein is NADH-ubiquinone oxidoreductase chain 6 (ND6).